The following is a 218-amino-acid chain: Transmembrane gamma-carboxyglutamic acid protein 1 (218 aa).

Positions 1–20 are excised as a propeptide; that stretch reads MGRVFLTGEKANSVLKRYPR. One can recognise a Gla domain in the interval 20–66; it reads RANGFFEEIRQGNIERECKEEFCTFEEAREAFENNEKTKEFWSTYTK. Topologically, residues 21–80 are extracellular; that stretch reads ANGFFEEIRQGNIERECKEEFCTFEEAREAFENNEKTKEFWSTYTKAQQGESNRGSDWFQ. A disulfide bond links Cys37 and Cys42. A helical transmembrane segment spans residues 81–101; that stretch reads FYLTFPLIFGLFIILLVIFLI. The Cytoplasmic portion of the chain corresponds to 102-218; the sequence is WRCFLRNKTR…PMVPVVTTIK (117 aa). The interval 161-195 is disordered; that stretch reads TRLSNCDPPPTYEEATGQVNLQRSETEPHLDPPPE.

In terms of processing, gla residues are produced after subsequent post-translational modifications of glutamate by a vitamin K-dependent gamma-carboxylase.

Its subcellular location is the membrane. The polypeptide is Transmembrane gamma-carboxyglutamic acid protein 1 (PRRG1) (Pongo abelii (Sumatran orangutan)).